The following is a 479-amino-acid chain: Type I inositol polyphosphate 5-phosphatase 8 (479 aa).

Catalytic regions lie at residues 300–315 (DKVI…LRAS) and 379–394 (KRRT…WKGD).

The protein belongs to the inositol polyphosphate 5-phosphatase family.

The polypeptide is Type I inositol polyphosphate 5-phosphatase 8 (Arabidopsis thaliana (Mouse-ear cress)).